The sequence spans 214 residues: ATP phosphoribosyltransferase (214 aa).

The protein belongs to the ATP phosphoribosyltransferase family. Short subfamily. In terms of assembly, heteromultimer composed of HisG and HisZ subunits.

The protein localises to the cytoplasm. It carries out the reaction 1-(5-phospho-beta-D-ribosyl)-ATP + diphosphate = 5-phospho-alpha-D-ribose 1-diphosphate + ATP. It participates in amino-acid biosynthesis; L-histidine biosynthesis; L-histidine from 5-phospho-alpha-D-ribose 1-diphosphate: step 1/9. Its function is as follows. Catalyzes the condensation of ATP and 5-phosphoribose 1-diphosphate to form N'-(5'-phosphoribosyl)-ATP (PR-ATP). Has a crucial role in the pathway because the rate of histidine biosynthesis seems to be controlled primarily by regulation of HisG enzymatic activity. The sequence is that of ATP phosphoribosyltransferase from Marinobacter nauticus (strain ATCC 700491 / DSM 11845 / VT8) (Marinobacter aquaeolei).